Here is a 391-residue protein sequence, read N- to C-terminus: F-box/kelch-repeat protein At3g16740 (391 aa).

The F-box domain maps to 1-47 (MVQISDLPRDLTEEVLSRIPVTSMRAVRFTCKKWNTLSKDRSFTKKH). 2 Kelch repeats span residues 104–154 (KIFH…YEEK) and 163–215 (ILRF…LKGN).

In terms of assembly, part of a SCF (ASK-cullin-F-box) protein ligase complex. Interacts with ASK11.

It localises to the nucleus. The protein operates within protein modification; protein ubiquitination. Its function is as follows. Component of SCF(ASK-cullin-F-box) E3 ubiquitin ligase complexes, which may mediate the ubiquitination and subsequent proteasomal degradation of target proteins. The sequence is that of F-box/kelch-repeat protein At3g16740 from Arabidopsis thaliana (Mouse-ear cress).